The primary structure comprises 236 residues: Phosphoribosylaminoimidazole-succinocarboxamide synthase (236 aa).

This sequence belongs to the SAICAR synthetase family.

The enzyme catalyses 5-amino-1-(5-phospho-D-ribosyl)imidazole-4-carboxylate + L-aspartate + ATP = (2S)-2-[5-amino-1-(5-phospho-beta-D-ribosyl)imidazole-4-carboxamido]succinate + ADP + phosphate + 2 H(+). It participates in purine metabolism; IMP biosynthesis via de novo pathway; 5-amino-1-(5-phospho-D-ribosyl)imidazole-4-carboxamide from 5-amino-1-(5-phospho-D-ribosyl)imidazole-4-carboxylate: step 1/2. This Rickettsia akari (strain Hartford) protein is Phosphoribosylaminoimidazole-succinocarboxamide synthase.